The sequence spans 1026 residues: Multidrug resistance protein MdtC (1026 aa).

The next 10 helical transmembrane spans lie at V12 to V34, Q336 to L353, A360 to F382, V431 to L450, F463 to L485, H525 to I547, L853 to V875, L895 to V917, L948 to L970, and T985 to F1007.

This sequence belongs to the resistance-nodulation-cell division (RND) (TC 2.A.6) family. MdtC subfamily. Part of a tripartite efflux system composed of MdtA, MdtB and MdtC. MdtC forms a heteromultimer with MdtB.

The protein resides in the cell inner membrane. This is Multidrug resistance protein MdtC from Pectobacterium atrosepticum (strain SCRI 1043 / ATCC BAA-672) (Erwinia carotovora subsp. atroseptica).